The chain runs to 451 residues: MDYKTKKNSNATVDIKLTFEASDLEKAFDKTYAEKQKNIKIPGFRPGKAPLNMVKRHLGDTVASDAINTLIVDGMASILTKLEHPMVRFPKFEIQDYQPGKNLIATAVYETNPEITLGKYKKIKVKLPEVSVSDSDIFDEIENIRKQLARKQLKEDGQTAASGDIIDMEYTVCEKGQEPKNASNTSNDYHLGHENNLKGFDENLYGLGVGDRKEFSHTFPEDYLQNEVAGKTFEYSVTIKALYVNILPTVDDDLAAEFDGSDSLNTLKDKIRKNLKERFEEGIRNKKLEEIFKEIIDDSKYIFPDSYVKEESEHVFHNMIHEFKLPHITMEKYAKMIKKDLKEVQESFRNLAENRLKHFFTRQKIAEIENVTYTETDFDADLEKLASSYQIPLSDLKEELEKGKLMDQYRENFFAKKVDHTLFDLVEKKYTNKLSIGQVKDYLNQKEEQKV.

Positions 163 to 248 constitute a PPIase FKBP-type domain; it reads GDIIDMEYTV…IKALYVNILP (86 aa).

It belongs to the FKBP-type PPIase family. Tig subfamily.

It is found in the cytoplasm. It carries out the reaction [protein]-peptidylproline (omega=180) = [protein]-peptidylproline (omega=0). In terms of biological role, involved in protein export. Acts as a chaperone by maintaining the newly synthesized protein in an open conformation. Functions as a peptidyl-prolyl cis-trans isomerase. The chain is Trigger factor from Leptospira borgpetersenii serovar Hardjo-bovis (strain JB197).